Consider the following 63-residue polypeptide: Large ribosomal subunit protein bL28 (63 aa).

Belongs to the bacterial ribosomal protein bL28 family.

The protein is Large ribosomal subunit protein bL28 of Kosmotoga olearia (strain ATCC BAA-1733 / DSM 21960 / TBF 19.5.1).